The chain runs to 107 residues: Sperm protamine P1 (107 aa).

2 stretches are compositionally biased toward basic and acidic residues: residues 1–10 (ALRKVDRNRF) and 20–33 (REAK…EFPG). The propeptide at 1–35 (ALRKVDRNRFVLDNVTPQPREAKRYKEEEEFPGHG) is removed in mature form. The tract at residues 1 to 107 (ALRKVDRNRF…RRRRRGKKGK (107 aa)) is disordered. A compositionally biased stretch (basic residues) spans 34-107 (HGRRRRRRSK…RRRRRGKKGK (74 aa)). Serine 42 carries the phosphoserine modification.

Post-translationally, a series of N-terminal cleavages yield the mature protein. In terms of processing, only the mature protein is phosphorylated. In terms of tissue distribution, gonads.

The protein resides in the nucleus. The protein localises to the chromosome. Functionally, protamines substitute for histones in the chromatin of sperm during the haploid phase of spermatogenesis. They compact sperm DNA into a highly condensed, stable and inactive complex. This chain is Sperm protamine P1, found in Bolinus brandaris (Purple dye murex).